Reading from the N-terminus, the 648-residue chain is MTIPFSPNPEQINVSSVPATQAEVQVEYTLRTKSDAIEHTSQSNRLKDLAKDPWLRTTGNRHASSGTEIPSSEQTKSARILVVGAGYGGLLFAVRLLQSGFSLGDILLVDAAGGFGGTWYWNRYPGLMCDIESYIYMPLLEETGHIPSRKYVPGEELRGHAERIAEKWKLHTQTLFRTTISCLTWDENKTQWIATASQSNSESQESNSFVISADFAILANGTLSKPKIPDLPGVDDFAGHVFHTARWDYDYTGGSPSIPVMDRLKTKRVGVIGTGSTAVQVIPQLARWAGELTVFQRTPVAVGLQENQETDRIWWSEEIDKVGPGWQRKRCENFNAFITDTRQEKLEEVMKEDKVQDGWTRFPSFSAAIGGAHNLQPDFLQLVVKVDEERQKTARQHIKSTVHDPATAEALLNSTYSWCKRPCFHQGYYETYNLPHVKLVNTAGEGVTELTRGGVLLDGKEYELDLIVLATGYDIGSLCPADRAQISVRGRKGHLMNQKWAAGPATFHGVMTRDFPNLFFPGTSQAGVTANQSYMFDRAAEHVSYIIRQAYNHVAAGFANPKVCVEPSQEAEDWWTMETVARAKAFAATKICSSGSYTISARSGGSGNVEKTARHMPWGEGMASYVKILEEWRKKGHMDGLEIAWKGT.

Residues 118-121 (TWYW), 130-131 (DI), and Tyr-136 contribute to the FAD site. Residue 128–130 (MCD) coordinates NADP(+). NADP(+) is bound by residues 274 to 280 (TGSTAVQ) and 297 to 298 (RT).

The protein belongs to the FAD-binding monooxygenase family. FAD serves as cofactor.

It functions in the pathway secondary metabolite biosynthesis; terpenoid biosynthesis. In terms of biological role, FAD-binding monooxygenase; part of the gene cluster that mediates the biosynthesis of terretonin, a fungal meroterpenoid that acts as a mycotoxin. The first step of the pathway is the synthesis of 3,5-dimethylorsellinic acid (DMOA) by the polyketide synthase trt4. DMOA is then prenylated into farnesyl-DMOA by the polyprenyl transferase trt2. Methylation by the methyltransferase trt5 then leads to farnesyl-DMOA methyl ester which is further subject to epoxidation by the FAD-dependent monooxygenase trt8 to yield epoxyfarnesyl-DMOA methyl ester. Cyclization of epoxyfarnesyl-DMOA methyl ester by the terpene cyclase trt1 leads to a tetracycle intermediate which is in turn converted to preterretonin. Dehydrogenase trt9 comes next to transform preterretonin to preterrenoid. The FAD-dependent monooxygenase trt3 is then required for the C-hydroxylation at C16 of preterrenoid to yield terrenoid. The cytochrome P450 trt6 catalyzes three successive oxidations to transform terrenoid into an unstable intermediate, which then undergoes the D-ring expansion and unusual rearrangement of the methoxy group to afford the core skeleton of terretonin. Trt14 catalyzes the D-ring expansion of terretonin involving intramolecular methoxy rearrangement as well as the hydrolysis of the expanded D-ring and the methyl ester moiety. Finally, the nonheme iron-dependent dioxygenase trt7 accomplishes the last two oxidation reactions steps to complete the biosynthesis of terretonin. Terretonin C is produced via spontaneous decarboxylation of the terretonin precursor. Another shunt product of the terretonin biosynthesis is dihydrofarnesyl-DMOA, derived from epoxyfarnesyl-DMOA through hydrolysis of the epoxide. The sequence is that of FAD-binding monooxygenase trt3 from Aspergillus terreus (strain NIH 2624 / FGSC A1156).